A 124-amino-acid polypeptide reads, in one-letter code: Large ribosomal subunit protein bL12 (124 aa).

This sequence belongs to the bacterial ribosomal protein bL12 family. Homodimer. Part of the ribosomal stalk of the 50S ribosomal subunit. Forms a multimeric L10(L12)X complex, where L10 forms an elongated spine to which 2 to 4 L12 dimers bind in a sequential fashion. Binds GTP-bound translation factors.

Functionally, forms part of the ribosomal stalk which helps the ribosome interact with GTP-bound translation factors. Is thus essential for accurate translation. The chain is Large ribosomal subunit protein bL12 from Chlorobium chlorochromatii (strain CaD3).